A 252-amino-acid chain; its full sequence is MKKKIIIANWKLNGNIQLLQTLLKPLVNFYIRHKNKSSIKLVIMPPYVYLYPMKSIISHSSILLGSQNVDINLIGAFTGEVSINMLKDVGVSYVLVGHSERRQYHRENDVIIAKKFKIVKDSHLIPVLCIGETEHEYLSCKTEKICKFQIDAIFDLLGPSGFNNSVIAYEPKWAIGTNTIPSINFIQKILMFIQNYIFNKQNSTIKLFSLQYGGSVNEHNIIELYDVKNIDGFLVGSASLSLDFFKKLLNNC.

9-11 (NWK) lines the substrate pocket. H98 functions as the Electrophile in the catalytic mechanism. E170 (proton acceptor) is an active-site residue. Substrate contacts are provided by G176 and S215.

This sequence belongs to the triosephosphate isomerase family. In terms of assembly, homodimer.

It is found in the cytoplasm. It carries out the reaction D-glyceraldehyde 3-phosphate = dihydroxyacetone phosphate. Its pathway is carbohydrate biosynthesis; gluconeogenesis. The protein operates within carbohydrate degradation; glycolysis; D-glyceraldehyde 3-phosphate from glycerone phosphate: step 1/1. Functionally, involved in the gluconeogenesis. Catalyzes stereospecifically the conversion of dihydroxyacetone phosphate (DHAP) to D-glyceraldehyde-3-phosphate (G3P). The chain is Triosephosphate isomerase from Buchnera aphidicola subsp. Baizongia pistaciae (strain Bp).